The primary structure comprises 397 residues: Lysosomal acid lipase/cholesteryl ester hydrolase (397 aa).

An N-terminal signal peptide occupies residues 1–25; that stretch reads MQLLGRVICFVVGILLSGGPTGTIS. Residues 26–72 constitute a propeptide, removed in mature form; that stretch reads AVDPEANMNVTEIIMHWGYPEHSVQTGDGYILGVHRIPHGRKNQFDK. N-linked (GlcNAc...) asparagine glycosylation is found at Asn34, Asn99, and Asn159. The 295-residue stretch at 84 to 378 folds into the AB hydrolase-1 domain; it reads HGFLADSSNW…EWDHLDFIWG (295 aa). Ser172 serves as the catalytic Charge relay system. N-linked (GlcNAc...) asparagine glycosylation is found at Asn271 and Asn319. His372 (charge relay system) is an active-site residue.

This sequence belongs to the AB hydrolase superfamily. Lipase family. Monomer. Glycosylation is not essential for catalytic activity.

The protein resides in the lysosome. It catalyses the reaction a sterol ester + H2O = a sterol + a fatty acid + H(+). The catalysed reaction is cholesteryl (9Z-octadecenoate) + H2O = cholesterol + (9Z)-octadecenoate + H(+). The enzyme catalyses a triacylglycerol + H2O = a 1,2-diacylglycerol + a fatty acid + H(+). It carries out the reaction 1,2-di-(9Z-octadecenoyl)-glycerol + (9Z)-octadecenoate + H(+) = 1,2,3-tri-(9Z-octadecenoyl)-glycerol + H2O. It catalyses the reaction a 1,2-diacylglycerol + H2O = a 1-acylglycerol + a fatty acid + H(+). The catalysed reaction is 1,2-di-(9Z-octadecenoyl)-glycerol + H2O = 1-(9Z-octadecenoyl)-glycerol + (9Z)-octadecenoate + H(+). The enzyme catalyses a 1,3-diacylglycerol + H2O = a 1-acylglycerol + a fatty acid + H(+). It carries out the reaction 1,3-di-(9Z-octadecenoyl)-glycerol + H2O = 1-(9Z-octadecenoyl)-glycerol + (9Z)-octadecenoate + H(+). Catalyzes the deacylation of cholesteryl ester core lipids of endocytosed low density lipoproteins to generate free fatty acids and cholesterol. Hydrolyzes triglycerides (1,2,3-triacylglycerol) and diglycerides (such as 1,2-diacylglycerol and 1,3-diacylglycerol) with preference for the acyl moieties at the sn-1 or sn-3 positions. The sequence is that of Lysosomal acid lipase/cholesteryl ester hydrolase (Lipa) from Rattus norvegicus (Rat).